A 147-amino-acid polypeptide reads, in one-letter code: Sec-independent protein translocase protein TatB (147 aa).

The helical transmembrane segment at 2–22 (FDGIGFMELLLIGVLGLVVLG) threads the bilayer. A compositionally biased stretch (polar residues) spans 85-97 (QLKQAAQSVNRPY). The tract at residues 85 to 147 (QLKQAAQSVN…DTRSNPKANG (63 aa)) is disordered. Over residues 113–133 (ASQSVSTEASPSASSAPTSES) the composition is skewed to low complexity.

It belongs to the TatB family. The Tat system comprises two distinct complexes: a TatABC complex, containing multiple copies of TatA, TatB and TatC subunits, and a separate TatA complex, containing only TatA subunits. Substrates initially bind to the TatABC complex, which probably triggers association of the separate TatA complex to form the active translocon.

It is found in the cell inner membrane. In terms of biological role, part of the twin-arginine translocation (Tat) system that transports large folded proteins containing a characteristic twin-arginine motif in their signal peptide across membranes. Together with TatC, TatB is part of a receptor directly interacting with Tat signal peptides. TatB may form an oligomeric binding site that transiently accommodates folded Tat precursor proteins before their translocation. This is Sec-independent protein translocase protein TatB from Shewanella sp. (strain ANA-3).